The following is a 67-amino-acid chain: Probable Sec-independent protein translocase protein TatE (67 aa).

Residues Ile-4 to Gly-21 traverse the membrane as a helical segment.

It belongs to the TatA/E family. TatE subfamily.

It is found in the cell inner membrane. Functionally, part of the twin-arginine translocation (Tat) system that transports large folded proteins containing a characteristic twin-arginine motif in their signal peptide across membranes. TatE shares overlapping functions with TatA. In Enterobacter cloacae subsp. cloacae (strain ATCC 13047 / DSM 30054 / NBRC 13535 / NCTC 10005 / WDCM 00083 / NCDC 279-56), this protein is Probable Sec-independent protein translocase protein TatE.